A 413-amino-acid chain; its full sequence is Bestrophin homolog 13 (413 aa).

4 helical membrane passes run 29–49 (LIYLILYYSVRVFYLKGIDLI), 72–92 (SYTRLIPLTFLLGFYVSNVVA), 236–256 (LVYTQVAALATYSFFFFTLFG), and 272–292 (LVVPVFTIVQFLFFVGWFKVG).

It belongs to the anion channel-forming bestrophin (TC 1.A.46) family. Calcium-sensitive chloride channel subfamily. Forms oligomers.

Its subcellular location is the cell membrane. Its function is as follows. Forms chloride channels. This Caenorhabditis elegans protein is Bestrophin homolog 13 (best-13).